The chain runs to 336 residues: E3 ubiquitin-protein ligase RING2 (336 aa).

Residues 2 to 179 (TQTVQTNGVQ…AEDNGDSSHC (178 aa)) are interaction with HIP2. An RING-type zinc finger spans residues 51-91 (CPICLDMLKNTMTTKECLHRFCADCIITALRSGNKECPTCR). Residues 93-98 (KLVSKR) are interaction with nucleosomes via an acidic patch on histone H2A and histone H2B. Residues 158–218 (RGKKHQIENG…NATENGGGDI (61 aa)) are disordered. Residues 176–190 (SSHCSNASVHSNQEA) are compositionally biased toward polar residues.

Component of chromatin-associated Polycomb (PcG) complexes. Component of a PRC1-like complex. Component of some MLL1/MLL complex.

Its subcellular location is the nucleus. The protein localises to the cytoplasm. It is found in the chromosome. It catalyses the reaction S-ubiquitinyl-[E2 ubiquitin-conjugating enzyme]-L-cysteine + [acceptor protein]-L-lysine = [E2 ubiquitin-conjugating enzyme]-L-cysteine + N(6)-ubiquitinyl-[acceptor protein]-L-lysine.. The protein operates within protein modification; protein ubiquitination. In terms of biological role, E3 ubiquitin-protein ligase that mediates monoubiquitination of 'Lys-119' of histone H2A (H2AK119Ub), thereby playing a central role in histone code and gene regulation. H2AK119Ub gives a specific tag for epigenetic transcriptional repression. Essential component of a Polycomb group (PcG) multiprotein PRC1-like complex, a complex class required to maintain the transcriptionally repressive state of many genes, including Hox genes, throughout development. PcG PRC1 complex acts via chromatin remodeling and modification of histones, rendering chromatin heritably changed in its expressibility. The polypeptide is E3 ubiquitin-protein ligase RING2 (rnf2) (Danio rerio (Zebrafish)).